The following is a 541-amino-acid chain: Copper transport protein CutJ (541 aa).

The first 25 residues, 1-25, serve as a signal peptide directing secretion; it reads MKRNRWWIILLLFLVFLPKTSFAHA. Cu cation-binding residues include H24 and H110. The next 8 helical transmembrane spans lie at 146–166, 180–200, 228–248, 262–282, 293–313, 335–355, 370–390, and 407–427; these read AILY…LFWY, ILTG…PIQT, SIWI…IPAI, PLIF…AAVV, FLHL…VLLL, WALT…FFII, LLVK…HFLL, and WAIG…PSPP.

It in the N-terminal section; belongs to the CopC family. In the C-terminal section; belongs to the CopD family.

The protein localises to the cell membrane. Functionally, involved in uptake of extracellular oxidized copper under copper-limiting conditions. The polypeptide is Copper transport protein CutJ (Bacillus subtilis (strain 168)).